Here is a 239-residue protein sequence, read N- to C-terminus: Pyridoxine 5'-phosphate synthase (239 aa).

N7 contacts 3-amino-2-oxopropyl phosphate. 9-10 contributes to the 1-deoxy-D-xylulose 5-phosphate binding site; it reads DH. R18 contacts 3-amino-2-oxopropyl phosphate. H43 functions as the Proton acceptor in the catalytic mechanism. Residues R45 and H50 each contribute to the 1-deoxy-D-xylulose 5-phosphate site. E70 (proton acceptor) is an active-site residue. T100 contacts 1-deoxy-D-xylulose 5-phosphate. H191 (proton donor) is an active-site residue. 3-amino-2-oxopropyl phosphate-binding positions include G192 and 213–214; that span reads GH.

The protein belongs to the PNP synthase family. As to quaternary structure, homooctamer; tetramer of dimers.

The protein resides in the cytoplasm. The catalysed reaction is 3-amino-2-oxopropyl phosphate + 1-deoxy-D-xylulose 5-phosphate = pyridoxine 5'-phosphate + phosphate + 2 H2O + H(+). It participates in cofactor biosynthesis; pyridoxine 5'-phosphate biosynthesis; pyridoxine 5'-phosphate from D-erythrose 4-phosphate: step 5/5. Its function is as follows. Catalyzes the complicated ring closure reaction between the two acyclic compounds 1-deoxy-D-xylulose-5-phosphate (DXP) and 3-amino-2-oxopropyl phosphate (1-amino-acetone-3-phosphate or AAP) to form pyridoxine 5'-phosphate (PNP) and inorganic phosphate. The protein is Pyridoxine 5'-phosphate synthase of Geobacter sulfurreducens (strain ATCC 51573 / DSM 12127 / PCA).